Here is a 257-residue protein sequence, read N- to C-terminus: NAD-capped RNA hydrolase NudC (257 aa).

Substrate-binding residues include Lys25 and Arg69. Zn(2+) is bound by residues Cys98 and Cys101. Glu111 lines the substrate pocket. Residues Cys116 and Cys119 each coordinate Zn(2+). Position 124 (Tyr124) interacts with substrate. In terms of domain architecture, Nudix hydrolase spans 125–248 (PQIAPCIIVA…TVARRLIEDT (124 aa)). Residues Ala158, Glu174, and Glu178 each contribute to the a divalent metal cation site. The Nudix box signature appears at 159-180 (GFVEVGETLEQAVAREVMEESG). 192 to 199 (QPWPFPQS) contacts substrate. A divalent metal cation is bound at residue Glu219. Residue Ala241 participates in substrate binding.

This sequence belongs to the Nudix hydrolase family. NudC subfamily. Homodimer. Requires Mg(2+) as cofactor. Mn(2+) is required as a cofactor. Zn(2+) serves as cofactor.

It catalyses the reaction a 5'-end NAD(+)-phospho-ribonucleoside in mRNA + H2O = a 5'-end phospho-adenosine-phospho-ribonucleoside in mRNA + beta-nicotinamide D-ribonucleotide + 2 H(+). The catalysed reaction is NAD(+) + H2O = beta-nicotinamide D-ribonucleotide + AMP + 2 H(+). It carries out the reaction NADH + H2O = reduced beta-nicotinamide D-ribonucleotide + AMP + 2 H(+). In terms of biological role, mRNA decapping enzyme that specifically removes the nicotinamide adenine dinucleotide (NAD) cap from a subset of mRNAs by hydrolyzing the diphosphate linkage to produce nicotinamide mononucleotide (NMN) and 5' monophosphate mRNA. The NAD-cap is present at the 5'-end of some mRNAs and stabilizes RNA against 5'-processing. Has preference for mRNAs with a 5'-end purine. Catalyzes the hydrolysis of a broad range of dinucleotide pyrophosphates. The polypeptide is NAD-capped RNA hydrolase NudC (Escherichia coli O127:H6 (strain E2348/69 / EPEC)).